Consider the following 140-residue polypeptide: Histone H3-like protein (140 aa).

The interval 1–36 (MSRTKQTASKALGGKAPRKGISAKSIPSSGCSPAMP) is disordered. N6,N6,N6-trimethyllysine; alternate is present on Lys-5. Position 5 is an N6,N6-dimethyllysine; alternate (Lys-5). Residues Lys-5 and Lys-10 each carry the N6-methyllysine; alternate modification. 4 positions are modified to N6-acetyllysine; alternate: Lys-10, Lys-15, Lys-19, and Lys-24. At Lys-15 the chain carries N6,N6-dimethyllysine; alternate. N6-methyllysine; alternate occurs at positions 19 and 24. Lys-56 and Lys-64 each carry N6-acetyllysine.

Belongs to the histone H3 family. As to quaternary structure, the nucleosome is a histone octamer containing two molecules each of H2A, H2B, H3 and H4 assembled in one H3-H4 heterotetramer and two H2A-H2B heterodimers. The octamer wraps approximately 147 bp of DNA. In terms of processing, mono-, di- and trimethylated to form H3K4me1/2/3. H3K4me activates gene expression by regulating transcription elongation and plays a role in telomere length maintenance. H3K4me enrichment correlates with transcription levels, and occurs in a 5' to 3' gradient with H3K4me3 enrichment at the 5'-end of genes, shifting to H3K4me2 and then H3K4me1. Acetylation of histone H3 leads to transcriptional activation.

It is found in the nucleus. The protein localises to the chromosome. Core component of nucleosome. Nucleosomes wrap and compact DNA into chromatin, limiting DNA accessibility to the cellular machineries which require DNA as a template. Histones thereby play a central role in transcription regulation, DNA repair, DNA replication and chromosomal stability. DNA accessibility is regulated via a complex set of post-translational modifications of histones, also called histone code, and nucleosome remodeling. The protein is Histone H3-like protein of Encephalitozoon cuniculi (strain GB-M1) (Microsporidian parasite).